The primary structure comprises 448 residues: Probable glycine dehydrogenase (decarboxylating) subunit 1 (448 aa).

The protein belongs to the GcvP family. N-terminal subunit subfamily. The glycine cleavage system is composed of four proteins: P, T, L and H. In this organism, the P 'protein' is a heterodimer of two subunits.

The catalysed reaction is N(6)-[(R)-lipoyl]-L-lysyl-[glycine-cleavage complex H protein] + glycine + H(+) = N(6)-[(R)-S(8)-aminomethyldihydrolipoyl]-L-lysyl-[glycine-cleavage complex H protein] + CO2. Functionally, the glycine cleavage system catalyzes the degradation of glycine. The P protein binds the alpha-amino group of glycine through its pyridoxal phosphate cofactor; CO(2) is released and the remaining methylamine moiety is then transferred to the lipoamide cofactor of the H protein. The chain is Probable glycine dehydrogenase (decarboxylating) subunit 1 from Lysinibacillus sphaericus (strain C3-41).